A 709-amino-acid chain; its full sequence is MDKLELVNDGLNIIDFIQKNQKEIQKTYGRSSIQQPSIKDQTKAWEDFLQCTSGESEQVEGGMSKDDGDVERRNLEDLSSTSPTDGTIGKRVSNTRDWAEGSDDIQLDPVVTDVVYHDHGGECTGYGFTSSPERGWSDYTSGANNGNVCLVSDAKMLSYAPEIAVSKEDRETDLVHLENKLSTTGLNPTAVPFTLRNLSDPAKDSPVIAEHYYGLGVKEQNVGPQTSRNVNLDSIKLYTSDDEEADQLEFEDEFAGSSSEVIVGISPEDEEPSSVGGKPNESIGRTIEGQSIRDNLQAKDNKSTDVPGAGPKDSAVKEEPPQKRLPMLAEEFECSGSEDPIIRELLKENSLINCQQGKDAQPPYHWSIERSISPDKTEIVNGAVQTADRQRPGTPMPKSRGIPIKKGTDAKYPSAGTENVPGSKSGATRHVRGSPPYQEGKSVNAENVQLNASTAVKETDKSEVNPVDDNDSLDDKYIMPSDDFSNTFFPHDTDRLNYHADHLGDYDLETLCEESVLMGVINSIKLINLDMRLNHIEEQVKEIPKIINKLESIDRVLAKTNTALSTIEGHLVSMMIMIPGKGKGERKGKNNPELKPVIGRDILEQQSLFSFDNVKNFRDGSLTNEPYGAAVQLREDLILPELNFEETNASQFVPMADDSSRDVIKTLIRTHIKDRELRSELIGYLNKAENDEEIQEIANTVNDIIDGNI.

Residues 1–35 (MDKLELVNDGLNIIDFIQKNQKEIQKTYGRSSIQQ) are N0 binding. The interval 53–92 (SGESEQVEGGMSKDDGDVERRNLEDLSSTSPTDGTIGKRV) is disordered. Residues 63-76 (MSKDDGDVERRNLE) are compositionally biased toward basic and acidic residues. The interaction with host STAT1 stretch occupies residues 110–140 (VVTDVVYHDHGGECTGYGFTSSPERGWSDYT). At Ser-257 the chain carries Phosphoserine; by host. Residues 265 to 324 (ISPEDEEPSSVGGKPNESIGRTIEGQSIRDNLQAKDNKSTDVPGAGPKDSAVKEEPPQKR) are disordered. A Phosphoserine; by host modification is found at Ser-350. The disordered stretch occupies residues 384–473 (VQTADRQRPG…VNPVDDNDSL (90 aa)). Composition is skewed to polar residues over residues 416 to 426 (GTENVPGSKSG) and 444 to 456 (NAEN…STAV). The tract at residues 475-580 (DKYIMPSDDF…LVSMMIMIPG (106 aa)) is multimerization.

Homotetramer. Interacts (via multimerization domain) with polymerase L; this interaction forms the polymerase L-P complex. Interacts (via N-terminus) with N0 (via Ncore); this interaction allows P to chaperon N0 to avoid N polymerization before encapsidation. Interacts (via C-terminus) with N-RNA template (via C-terminus); this interaction positions the polymerase on the template for both transcription and replication. Interacts with host STAT1.

Its subcellular location is the virion. The protein localises to the host cytoplasm. Functionally, essential cofactor of the RNA polymerase L that plays a central role in the transcription and replication by forming the polymerase complex with RNA polymerase L and recruiting L to the genomic N-RNA template for RNA synthesis. Also plays a central role in the encapsidation of nascent RNA chains by forming the encapsidation complex with the nucleocapsid protein N (N-P complex). Acts as a chaperone for newly synthesized free N protein, so-called N0, allowing encapsidation of nascent RNA chains during replication. The nucleoprotein protein N prevents excessive phosphorylation of P, which leads to down-regulation of viral transcription/ replication. Participates, together with N, in the formation of viral factories (viroplasms), which are large inclusions in the host cytoplasm where replication takes place. This chain is Phosphoprotein (P/V/C), found in Nipah virus.